A 372-amino-acid chain; its full sequence is uncharacterized protein (372 aa).

Composition is skewed to basic residues over residues 1–11 (MNKILGLRRAK) and 38–48 (RLRRGMQRLSR). The interval 1–127 (MNKILGLRRA…NSGTRDTPCW (127 aa)) is disordered. Basic and acidic residues predominate over residues 50-61 (GYGDNRRSRGSE). Over residues 93–104 (GKTSPCGSSGTP) the composition is skewed to polar residues.

This is an uncharacterized protein from Psittacid herpesvirus 1 (isolate Amazon parrot/-/97-0001/1997) (PsHV-1).